Consider the following 432-residue polypeptide: MVNTTIKTTKSQEIFAAAQNLMPGGVSSPVRAFKSVGGQPIVFDHVKGAYIWDVDGNQYIDYVGTWGPAICGHAHPDVIGALHEALEKGTSFGAPSFLENVLAEMVIAAVPSIEMVRFVNSGTEACMAVLRLMRAFTNREKVIKFEGCYHGHADMFLVKAGSGVATLGLPDSPGVPKSATSSTLTAPYNDLEAVKALFAENRDQIAGVILEPVVGNAGFITPDAGFLEGLRELTHEHGALLVFDEVMTGFRIAYGGAQEKFGVTPDLTTLGKVIGGGLPVGAYGGRRDIMSMIAPAGPVYQAGTLSGNPLAMTAGIKTLELLQKPGAYEYLERITKKLADGLLQVAQETGHAACGGHISAMFGLFFTSGPVHNYEDAKNSDTAKFGRFHRGMLERGVYLAPSQFEAGFTSLAHTDEDIDQTIAIAREVLSSI.

Lysine 272 carries the post-translational modification N6-(pyridoxal phosphate)lysine.

This sequence belongs to the class-III pyridoxal-phosphate-dependent aminotransferase family. HemL subfamily. In terms of assembly, homodimer. Pyridoxal 5'-phosphate is required as a cofactor.

The protein resides in the cytoplasm. The catalysed reaction is (S)-4-amino-5-oxopentanoate = 5-aminolevulinate. The protein operates within porphyrin-containing compound metabolism; protoporphyrin-IX biosynthesis; 5-aminolevulinate from L-glutamyl-tRNA(Glu): step 2/2. It participates in porphyrin-containing compound metabolism; chlorophyll biosynthesis. The chain is Glutamate-1-semialdehyde 2,1-aminomutase from Trichormus variabilis (strain ATCC 29413 / PCC 7937) (Anabaena variabilis).